A 554-amino-acid chain; its full sequence is Heterochromatin protein 1-binding protein 3 (554 aa).

Alanine 2 is subject to N-acetylalanine. Phosphoserine is present on serine 6. Disordered regions lie at residues 30 to 136 (LGEK…KTIP) and 142 to 161 (SASQ…SPRP). Threonine 51 is modified (phosphothreonine). The span at 60–71 (GEEEKPEPDGSS) shows a compositional bias: acidic residues. Residue lysine 64 forms a Glycyl lysine isopeptide (Lys-Gly) (interchain with G-Cter in SUMO2) linkage. 2 positions are modified to phosphothreonine: glutamate 72 and threonine 85. Positions 72 to 93 (EESISTVEEQENETPPATSSEA) are enriched in polar residues. Over residues 94-129 (EQPKGEPESGEKEENNNKSAEEPKKDEKDQSKEKEK) the composition is skewed to basic and acidic residues. Lysine 97 participates in a covalent cross-link: Glycyl lysine isopeptide (Lys-Gly) (interchain with G-Cter in SUMO2). Over residues 142–156 (SASQLARAQRQTPMA) the composition is skewed to polar residues. Residues serine 144, serine 157, and serine 158 each carry the phosphoserine modification. Positions 159-234 (PRPKMDAILT…GASGSFVVVQ (76 aa)) constitute an H15 1 domain. Lysine 192 is modified (N6-acetyllysine). The segment at 229–254 (SFVVVQKSKPPQKSKNRKKGSALDPE) is disordered. Residues 238–248 (PPQKSKNRKKG) are compositionally biased toward basic residues. A Phosphoserine modification is found at serine 249. A PxVxL motif motif is present at residues 255–259 (PQVKL). H15 domains follow at residues 255-330 (PQVK…QLKK) and 337-413 (LGGS…QLSF). Residue lysine 258 forms a Glycyl lysine isopeptide (Lys-Gly) (interchain with G-Cter in SUMO2) linkage. The disordered stretch occupies residues 420 to 554 (GVLFPKKESG…AMKKSFKTKK (135 aa)). Residues 430–451 (GSDDEDEDDDDDESSEDSEDEE) show a composition bias toward acidic residues. Residues serine 443, serine 444, and serine 447 each carry the phosphoserine modification. The span at 464 to 475 (AKSQGKTASMKQ) shows a compositional bias: polar residues. Basic residues-rich tracts occupy residues 490 to 511 (GKVR…RKAR) and 544 to 554 (SAMKKSFKTKK).

In terms of assembly, interacts (via PxVxL motif) with CBX5 (via Trp-174).

The protein resides in the nucleus. The protein localises to the chromosome. Functionally, component of heterochromatin that maintains heterochromatin integrity during G1/S progression and regulates the duration of G1 phase to critically influence cell proliferative capacity. May play a role in hypoxia-induced oncogenesis. The polypeptide is Heterochromatin protein 1-binding protein 3 (Hp1bp3) (Mus musculus (Mouse)).